The sequence spans 649 residues: MITQAMIENFPSSPGVYLMKSADDTVIYVGKARNLKKRVRSYAGDTRDSRIHIRFMVQLVHSVDYLVTDTEKEALILENTLIKQHRPKYNINLRDDKTYFSLRMDMKEQFPRLSIVRKIPSDGARYFGPYASATAAKEVLKQLYKMFPLRHYPLATCMARKRPCLYHQIKQCSAPCCGLISAAEYAALAQGAALFLEGKNNEVARLYRSKMNLASEQMRYEDAARYRDLLRAIEVTVERQKMVAQSGDSDVFGVHREADRMQIALLHIRGGTLTGGRSFLFDWELETEEGLASFLNEYYDLDAPIPPQVLIPLPIAEPAALEELLSEKAGKKVTIAVPQRGPKLEMVKLAGKNAETAAQERLARESSSATLLTELAEKLNLPHPPRRIECYDISNIQGEMAVGSRVVFIDGRADKSLYRRYRIKGVLQSDDFAMMREVLSRRFKADSHEEKPDLIVVDGGLGQLGVLNAVLDELEVTGVEAAGLAKSRVARDMESEEIERSDERVFRPGRKNAIALRQSSAPLLLLVRIRDEAHRFAVTYHKDVRSKVLTGSELDGVAGIGEKRKKALLKHFGSLKRVKEATLEELKGAPGMTESAARALVERLHGGPLPNPPPPGEGAMGDGSIPSPRNGVMDDSIPSPSGRGWPKAG.

Residues 12 to 91 enclose the GIY-YIG domain; the sequence is SSPGVYLMKS…IKQHRPKYNI (80 aa). The region spanning 201 to 236 is the UVR domain; it reads NEVARLYRSKMNLASEQMRYEDAARYRDLLRAIEVT. The tract at residues 603-649 is disordered; that stretch reads RLHGGPLPNPPPPGEGAMGDGSIPSPRNGVMDDSIPSPSGRGWPKAG.

Belongs to the UvrC family. Interacts with UvrB in an incision complex.

It is found in the cytoplasm. Its function is as follows. The UvrABC repair system catalyzes the recognition and processing of DNA lesions. UvrC both incises the 5' and 3' sides of the lesion. The N-terminal half is responsible for the 3' incision and the C-terminal half is responsible for the 5' incision. The chain is UvrABC system protein C from Geobacter sp. (strain M21).